The following is a 514-amino-acid chain: 2,3-bisphosphoglycerate-independent phosphoglycerate mutase (514 aa).

Mn(2+) is bound by residues Asp14 and Ser64. Ser64 acts as the Phosphoserine intermediate in catalysis. Substrate contacts are provided by residues His125, 155-156 (RD), Arg187, Arg193, 263-266 (RADR), and Lys337. The Mn(2+) site is built by Asp404, His408, Asp445, His446, and His464.

The protein belongs to the BPG-independent phosphoglycerate mutase family. As to quaternary structure, monomer. Mn(2+) serves as cofactor.

It catalyses the reaction (2R)-2-phosphoglycerate = (2R)-3-phosphoglycerate. The protein operates within carbohydrate degradation; glycolysis; pyruvate from D-glyceraldehyde 3-phosphate: step 3/5. Its function is as follows. Catalyzes the interconversion of 2-phosphoglycerate and 3-phosphoglycerate. This is 2,3-bisphosphoglycerate-independent phosphoglycerate mutase from Serratia proteamaculans (strain 568).